The following is a 208-amino-acid chain: Calaxin (208 aa).

EF-hand domains lie at 64–99 (TDDM…FLHG), 100–135 (TLEE…SLLK), and 145–180 (GVKD…ENLL). Residues Asp77, Asp79, Asp81, Asp113, Asn115, Asp117, Tyr119, Glu124, Asp158, Asp160, Asp162, Lys164, and Asp169 each contribute to the Ca(2+) site.

Component of the outer dynein arm-docking complex along with ODAD1, ODAD2, ODAD3 and ODAD4.

The protein localises to the cytoplasm. The protein resides in the cytoskeleton. Its subcellular location is the cilium axoneme. It is found in the cell projection. It localises to the cilium. The protein localises to the flagellum. Its function is as follows. Component of the outer dynein arm-docking complex (ODA-DC) that mediates outer dynein arms (ODA) binding onto the doublet microtubule. Seems to regulate the assembly of both ODAs and their axonemal docking complex onto ciliary microtubules. Regulates ciliary and flagellar motility and is required for cilia-driven determination of body laterality. The sequence is that of Calaxin (clxn) from Xenopus laevis (African clawed frog).